Reading from the N-terminus, the 25-residue chain is Caerin-1.5 (25 aa).

L25 is modified (leucine amide).

Expressed by the skin parotoid and/or rostral glands.

It localises to the secreted. Functionally, antibacterial peptide, that adopts an alpha helical conformation which can disrupt bacterial membranes. Each caerin displays a different antimicrobial specificity. This chain is Caerin-1.5, found in Ranoidea caerulea (Green tree frog).